Here is a 542-residue protein sequence, read N- to C-terminus: CTP synthase (542 aa).

Residues 1–265 (MARYVFITGG…DSEILSAFGI (265 aa)) form an amidoligase domain region. Residue S13 coordinates CTP. Position 13 (S13) interacts with UTP. ATP is bound at residue 14–19 (SLGKGI). L-glutamine is bound at residue Y54. D71 contacts ATP. D71 and E139 together coordinate Mg(2+). Residues 146–148 (DIE), 186–191 (KTKPTQ), and K222 each bind CTP. Residues 186–191 (KTKPTQ) and K222 each bind UTP. The 251-residue stretch at 291–541 (TIAIVGKYTG…IAATVEQSRL (251 aa)) folds into the Glutamine amidotransferase type-1 domain. A353 provides a ligand contact to L-glutamine. The active-site Nucleophile; for glutamine hydrolysis is C380. Residues 381–384 (FGMQ), E404, and R469 each bind L-glutamine. Catalysis depends on residues H514 and E516.

Belongs to the CTP synthase family. Homotetramer.

The catalysed reaction is UTP + L-glutamine + ATP + H2O = CTP + L-glutamate + ADP + phosphate + 2 H(+). It catalyses the reaction L-glutamine + H2O = L-glutamate + NH4(+). It carries out the reaction UTP + NH4(+) + ATP = CTP + ADP + phosphate + 2 H(+). It functions in the pathway pyrimidine metabolism; CTP biosynthesis via de novo pathway; CTP from UDP: step 2/2. Allosterically activated by GTP, when glutamine is the substrate; GTP has no effect on the reaction when ammonia is the substrate. The allosteric effector GTP functions by stabilizing the protein conformation that binds the tetrahedral intermediate(s) formed during glutamine hydrolysis. Inhibited by the product CTP, via allosteric rather than competitive inhibition. In terms of biological role, catalyzes the ATP-dependent amination of UTP to CTP with either L-glutamine or ammonia as the source of nitrogen. Regulates intracellular CTP levels through interactions with the four ribonucleotide triphosphates. The protein is CTP synthase of Bartonella bacilliformis (strain ATCC 35685 / KC583 / Herrer 020/F12,63).